The sequence spans 114 residues: Protein ORF3 (114 aa).

Hydrophobic stretches follow at residues 6–22 (CALG…CLCC) and 33–53 (AVVG…GLIL). The segment at 28 to 68 (VSRLAAVVGGAAAVPAVVSGVTGLILSPSQSPIFIQPTPSP) is interaction with host HPX. Residues 48–72 (VTGLILSPSQSPIFIQPTPSPPMSP) form an interaction with the capsid protein region. Residue Ser71 is modified to Phosphoserine; by host. The homodimerization, and interaction with host AMBP/bikunin stretch occupies residues 72-114 (PLRPGLDLVFANPPDHSAPLGVTRPSAPPLPHVVDLPQLGPRR). Residues 91–114 (LGVTRPSAPPLPHVVDLPQLGPRR) form a disordered region. The segment at 95–104 (RPSAPPLPHV) is interaction with host SRC, HCK, FYN, PIK3R3 and GRB2. The PTAP/PSAP motif motif lies at 96 to 99 (PSAP).

This sequence belongs to the hepevirus ORF3 protein family. In terms of assembly, forms homooligomers. Interacts with host SRC, HCK, FYN, PIK3R3 and GRB2 (via SH3 domain); binding does not activate the kinases. Interacts with host AMBP/bikunin and AMBP/alpha-1-microglobulin peptides. Interacts with host HPX/hemopexin. Interacts (when phosphorylated) with capsid protein ORF2. Interacts with host TSG101; this interaction plays a role in viral release from the host cell. Interacts with host SIRPA; this interaction down-regulates the phosphorylation of host IRF3. Post-translationally, palmitoylated in the N-terminus.

Its subcellular location is the host endoplasmic reticulum membrane. The protein localises to the host cytoplasm. It localises to the host cytoskeleton. The protein resides in the virion. It is found in the host cell membrane. Small multifunctional phosphoprotein involved in virion morphogenesis, egress and counteracting host innate immunity. Plays critical roles in the final steps of viral release by interacting with host TSG101, a member of the vacuolar protein-sorting pathway and using other cellular host proteins involved in vesicle formation pathway. Also acts as a viroporin and forms ion conductive pores allowing viral particle release. Impairs the generation of type I interferon by down-regulating host TLR3 and TLR7 as well as their downstream signaling pathways. Down-regulates the phosphorylation of host IRF3 via the interaction with host SIRP-alpha, thereby inhibiting IFN-I expression. Interacts with host microtubules. The protein is Protein ORF3 of Hepatitis E virus genotype 1 (isolate Human/Burma) (HEV-1).